The primary structure comprises 290 residues: Glycine--tRNA ligase alpha subunit (290 aa).

This sequence belongs to the class-II aminoacyl-tRNA synthetase family. In terms of assembly, tetramer of two alpha and two beta subunits.

It localises to the cytoplasm. It carries out the reaction tRNA(Gly) + glycine + ATP = glycyl-tRNA(Gly) + AMP + diphosphate. In Syntrophotalea carbinolica (strain DSM 2380 / NBRC 103641 / GraBd1) (Pelobacter carbinolicus), this protein is Glycine--tRNA ligase alpha subunit.